Reading from the N-terminus, the 163-residue chain is Nucleotide-binding protein BC_1159 (163 aa).

It belongs to the YajQ family.

In terms of biological role, nucleotide-binding protein. In Bacillus cereus (strain ATCC 14579 / DSM 31 / CCUG 7414 / JCM 2152 / NBRC 15305 / NCIMB 9373 / NCTC 2599 / NRRL B-3711), this protein is Nucleotide-binding protein BC_1159.